Consider the following 131-residue polypeptide: Small ribosomal subunit protein uS8 (131 aa).

The protein belongs to the universal ribosomal protein uS8 family. Part of the 30S ribosomal subunit. Contacts proteins S5 and S12.

In terms of biological role, one of the primary rRNA binding proteins, it binds directly to 16S rRNA central domain where it helps coordinate assembly of the platform of the 30S subunit. The polypeptide is Small ribosomal subunit protein uS8 (Thermodesulfovibrio yellowstonii (strain ATCC 51303 / DSM 11347 / YP87)).